A 98-amino-acid polypeptide reads, in one-letter code: Defensin-like protein 68 (98 aa).

Positions 1-19 (MGSSKLLVALTLVVMITIS) are cleaved as a signal peptide. 4 disulfides stabilise this stretch: Cys-38-Cys-88, Cys-42-Cys-65, Cys-51-Cys-86, and Cys-55-Cys-87.

This sequence belongs to the DEFL family.

The protein resides in the secreted. This Arabidopsis thaliana (Mouse-ear cress) protein is Defensin-like protein 68.